A 142-amino-acid polypeptide reads, in one-letter code: Large ribosomal subunit protein uL11 (142 aa).

The protein belongs to the universal ribosomal protein uL11 family. Part of the ribosomal stalk of the 50S ribosomal subunit. Interacts with L10 and the large rRNA to form the base of the stalk. L10 forms an elongated spine to which L12 dimers bind in a sequential fashion forming a multimeric L10(L12)X complex. Post-translationally, one or more lysine residues are methylated.

In terms of biological role, forms part of the ribosomal stalk which helps the ribosome interact with GTP-bound translation factors. This Mycobacterium ulcerans (strain Agy99) protein is Large ribosomal subunit protein uL11.